Reading from the N-terminus, the 129-residue chain is Large ribosomal subunit protein eL32 (129 aa).

This sequence belongs to the eukaryotic ribosomal protein eL32 family.

In Methanosarcina mazei (strain ATCC BAA-159 / DSM 3647 / Goe1 / Go1 / JCM 11833 / OCM 88) (Methanosarcina frisia), this protein is Large ribosomal subunit protein eL32 (rpl32e).